The sequence spans 377 residues: Nitric oxide reductase FlRd-NAD(+) reductase (377 aa).

It belongs to the FAD-dependent oxidoreductase family. FAD serves as cofactor.

The protein resides in the cytoplasm. The catalysed reaction is 2 reduced [nitric oxide reductase rubredoxin domain] + NAD(+) + H(+) = 2 oxidized [nitric oxide reductase rubredoxin domain] + NADH. The protein operates within nitrogen metabolism; nitric oxide reduction. Its function is as follows. One of at least two accessory proteins for anaerobic nitric oxide (NO) reductase. Reduces the rubredoxin moiety of NO reductase. The polypeptide is Nitric oxide reductase FlRd-NAD(+) reductase (Salmonella dublin (strain CT_02021853)).